Reading from the N-terminus, the 437-residue chain is Phosphomethylpyrimidine synthase (437 aa).

Substrate-binding positions include Asn69, Met98, Tyr127, His163, 185–187, 226–229, and Glu265; these read SRG and DACR. Zn(2+) is bound at residue His269. Tyr292 lines the substrate pocket. His333 contributes to the Zn(2+) binding site. 3 residues coordinate [4Fe-4S] cluster: Cys409, Cys412, and Cys416.

It belongs to the ThiC family. It depends on [4Fe-4S] cluster as a cofactor.

The enzyme catalyses 5-amino-1-(5-phospho-beta-D-ribosyl)imidazole + S-adenosyl-L-methionine = 4-amino-2-methyl-5-(phosphooxymethyl)pyrimidine + CO + 5'-deoxyadenosine + formate + L-methionine + 3 H(+). It participates in cofactor biosynthesis; thiamine diphosphate biosynthesis. Catalyzes the synthesis of the hydroxymethylpyrimidine phosphate (HMP-P) moiety of thiamine from aminoimidazole ribotide (AIR) in a radical S-adenosyl-L-methionine (SAM)-dependent reaction. The protein is Phosphomethylpyrimidine synthase of Clostridium botulinum (strain Kyoto / Type A2).